The chain runs to 365 residues: TD and POZ domain-containing protein 3 (365 aa).

The region spanning 19–149 (KFCYNWTISN…EDQFTICCKV (131 aa)) is the MATH domain. One can recognise a BTB domain in the interval 188–250 (TDCCLLVAGH…EMMGFIYTGK (63 aa)).

It belongs to the Tdpoz family.

In Mus musculus (Mouse), this protein is TD and POZ domain-containing protein 3.